The following is a 140-amino-acid chain: Pro-vaccinia growth factor (140 aa).

The N-terminal stretch at 1–18 (MLINYLMLLFAAMIIRSF) is a signal peptide. Topologically, residues 19–100 (ADSGNAIETT…SEKPNTTTSY (82 aa)) are extracellular. Residue asparagine 34 is glycosylated (N-linked (GlcNAc...) asparagine; by host). The EGF-like domain maps to 41–81 (AIRLCGPEGDGYCLHGDCIHARDIDGMYCRCSHGYTGIRCQ). Cystine bridges form between cysteine 45–cysteine 58, cysteine 53–cysteine 69, and cysteine 71–cysteine 80. Residue asparagine 95 is glycosylated (N-linked (GlcNAc...) asparagine; by host). Residues 101–121 (IPSPGIMLVLVGIIIITCCLL) traverse the membrane as a helical segment. At 122-140 (SVYRFTRRTKLPLQDMVVP) the chain is on the cytoplasmic side.

It belongs to the orthopoxvirus OPG019 family. As to quaternary structure, vaccinia growth factor interacts with host EGFR and promotes EGFR dimerization.

It is found in the host membrane. It localises to the secreted. Its function is as follows. Stimulates cellular proliferation (hyperplasia)and mobility around infected cells to promote rapid and efficient spread of infection. This effect is beneficial for virus replication in vivo, because poxviruses replicate possibly better in proliferating cells than in quiescent cells. Acts by binding host EGFR, inducing its dimerization, autophosphorylation and leading to activation of several cellular pathways regulating cell proliferation or cell survival. The activation by host EGFR of mitogen activated protein kinases (MAPK) and extracellular-signal regulated kinases (ERK) are essential for the positive effect of vaccinia growth factor on poxvirus virulence in vivo. The chain is Pro-vaccinia growth factor (OPG019) from Homo sapiens (Human).